Here is a 397-residue protein sequence, read N- to C-terminus: Acetyl-CoA acetyltransferase, cytosolic (397 aa).

Residue Met-1 is modified to N-acetylmethionine. The active-site Acyl-thioester intermediate is the Cys-92. An N6-acetyllysine modification is found at Lys-200. CoA contacts are provided by Arg-223 and Ser-226. N6-acetyllysine occurs at positions 233 and 235. Ser-252 contributes to the CoA binding site. The active-site Proton donor/acceptor is the Cys-383.

It belongs to the thiolase-like superfamily. Thiolase family. Homotetramer.

Its subcellular location is the cytoplasm. The protein localises to the cytosol. It carries out the reaction 2 acetyl-CoA = acetoacetyl-CoA + CoA. It functions in the pathway lipid metabolism; fatty acid metabolism. Involved in the biosynthetic pathway of cholesterol. The polypeptide is Acetyl-CoA acetyltransferase, cytosolic (ACAT2) (Homo sapiens (Human)).